Reading from the N-terminus, the 319-residue chain is Acetyl-coenzyme A carboxylase carboxyl transferase subunit alpha (319 aa).

In terms of domain architecture, CoA carboxyltransferase C-terminal spans 39-293; it reads RLQKKSNDLT…KAVLEKQLHE (255 aa).

The protein belongs to the AccA family. Acetyl-CoA carboxylase is a heterohexamer composed of biotin carboxyl carrier protein (AccB), biotin carboxylase (AccC) and two subunits each of ACCase subunit alpha (AccA) and ACCase subunit beta (AccD).

Its subcellular location is the cytoplasm. The enzyme catalyses N(6)-carboxybiotinyl-L-lysyl-[protein] + acetyl-CoA = N(6)-biotinyl-L-lysyl-[protein] + malonyl-CoA. Its pathway is lipid metabolism; malonyl-CoA biosynthesis; malonyl-CoA from acetyl-CoA: step 1/1. In terms of biological role, component of the acetyl coenzyme A carboxylase (ACC) complex. First, biotin carboxylase catalyzes the carboxylation of biotin on its carrier protein (BCCP) and then the CO(2) group is transferred by the carboxyltransferase to acetyl-CoA to form malonyl-CoA. The protein is Acetyl-coenzyme A carboxylase carboxyl transferase subunit alpha of Neisseria meningitidis serogroup C / serotype 2a (strain ATCC 700532 / DSM 15464 / FAM18).